We begin with the raw amino-acid sequence, 296 residues long: 2-haloacid dehalogenase, configuration-inverting (296 aa).

Belongs to the HAD-like hydrolase superfamily. S-2-haloalkanoic acid dehalogenase family.

The enzyme catalyses an (S)-2-haloacid + H2O = a (2R)-2-hydroxycarboxylate + a halide anion + H(+). It catalyses the reaction an (R)-2-haloacid + H2O = a (2S)-2-hydroxycarboxylate + a halide anion + H(+). In terms of biological role, dehalogenates both (S)- and (R)-2-haloalkanoic acids to the corresponding (R)- and (S)-hydroxyalkanoic acids, respectively, with inversion of configuration at C-2. Acts on 2-haloalkanoic acids whose carbon chain lengths are five or less. In Alcaligenes xylosoxydans xylosoxydans (Achromobacter xylosoxidans), this protein is 2-haloacid dehalogenase, configuration-inverting (dhlC).